An 814-amino-acid chain; its full sequence is Protein kinase C-binding protein NELL2 (814 aa).

An N-terminal signal peptide occupies residues 1 to 19; it reads MEFILGIFCVLFCLRAGAG. N51, N223, and N296 each carry an N-linked (GlcNAc...) asparagine glycan. The Laminin G-like domain maps to 53 to 226; it reads SKAFLFQDTS…SQCPDLNRTC (174 aa). The region spanning 270 to 329 is the VWFC 1 domain; that stretch reads RSCTVKGNIYRELESWMDGCKKCTCTNGTAQCETLTCSAPNCLSGFSPAYVPGKCCKECQ. The region spanning 395–437 is the EGF-like 1 domain; the sequence is GHDFCSEGHNCMGYSICKNLDDKAVCICRDGFRALREDNAYCE. Cystine bridges form between C399-C411, C405-C420, and C422-C436. Positions 438, 439, and 441 each coordinate Ca(2+). Residues 438–479 form the EGF-like 2; calcium-binding domain; it reads DIDECTEGRHYCRENTVCVNTPGSFMCVCQTGYLKIDDYSCT. Disulfide bonds link C442-C455, C449-C464, C466-C478, C484-C497, C491-C506, C508-C519, C523-C533, C527-C539, and C541-C550. Ca(2+) is bound by residues N457, T458, and S461. The EGF-like 3; calcium-binding domain occupies 480–520; the sequence is EHNECATNQHSCDENAMCFNTVGGHNCVCQPGYTGNGTDCR. Residue N515 is glycosylated (N-linked (GlcNAc...) asparagine). Residues 521-551 enclose the EGF-like 4 domain; that stretch reads AFCKDGCRNGGTCIAPNICACPQGFTGPSCE. D553, I554, and E556 together coordinate Ca(2+). One can recognise an EGF-like 5; calcium-binding domain in the interval 553-599; sequence DIDECTEGFVQCDSRANCINLPGWYHCECRDGYHDNGMFSLGGESCE. Intrachain disulfides connect C557–C570, C564–C579, and C581–C598. Ca(2+) is bound by residues N572, L573, and W576. Residues D600, I601, and E603 each contribute to the Ca(2+) site. The region spanning 600-635 is the EGF-like 6; calcium-binding domain; it reads DIDECATGRHSCSNDTVCFNLDGGFDCRCPHGKNCS. Disulfide bonds link C604/C617, C611/C626, and C628/C634. N-linked (GlcNAc...) asparagine glycosylation occurs at N613. Ca(2+) is bound by residues N619, L620, and G623. A glycan (N-linked (GlcNAc...) asparagine) is linked at N633. VWFC domains are found at residues 636-691 and 696-754; these read GDCT…PECD and SQCL…PRCV.

Homotrimer.

It is found in the secreted. Its function is as follows. May regulate neuronal differentiation, polarization and axon guidance. The protein is Protein kinase C-binding protein NELL2 (nell2.L) of Xenopus laevis (African clawed frog).